The following is a 552-amino-acid chain: Urocanate hydratase (552 aa).

NAD(+) contacts are provided by residues 49–50, Gln-127, 173–175, Glu-193, Arg-198, 239–240, 260–264, 270–271, and Tyr-319; these read GG, GMG, NA, QTSAH, and YV. Cys-407 is an active-site residue. NAD(+) is bound at residue Gly-489.

This sequence belongs to the urocanase family. As to quaternary structure, composed of at least two subunits. NAD(+) is required as a cofactor.

It localises to the cytoplasm. The enzyme catalyses 4-imidazolone-5-propanoate = trans-urocanate + H2O. It functions in the pathway amino-acid degradation; L-histidine degradation into L-glutamate; N-formimidoyl-L-glutamate from L-histidine: step 2/3. Catalyzes the conversion of urocanate to 4-imidazolone-5-propionate. The polypeptide is Urocanate hydratase (Bacillus subtilis (strain 168)).